A 274-amino-acid chain; its full sequence is uncharacterized protein (274 aa).

This is an uncharacterized protein from Mycobacterium tuberculosis (strain ATCC 25618 / H37Rv).